We begin with the raw amino-acid sequence, 246 residues long: MRGIILLSFVLTSCLAADAVPAAADAAAVTTTTPAGAAAAAATTATTAKANTAATTNTAAAAAAAADTLTTKGTTTGTAKTTGVTTGTAKTTATTAVTSDTAVAANPATMNPSELSIYSLTVTMNQAQLQNFLATHSSGAATAGATGTSVASGASGASLEDSTTTTAAAAAGGNGAATIDDTTKGLTFVTSRTLKPSSSATSQGSAQASGSGSNASQANAAGVYSTNSVLVFVSICIGFIGGSLGI.

The signal sequence occupies residues 1-16; the sequence is MRGIILLSFVLTSCLA. An N-linked (GlcNAc...) asparagine glycan is attached at asparagine 214. The GPI-anchor amidated asparagine moiety is linked to residue asparagine 219. Positions 220-246 are cleaved as a propeptide — removed in mature form; sequence AAGVYSTNSVLVFVSICIGFIGGSLGI.

The protein localises to the cell membrane. The protein is Predicted GPI-anchored protein 33 (PGA33) of Candida albicans (strain SC5314 / ATCC MYA-2876) (Yeast).